Reading from the N-terminus, the 196-residue chain is Endonuclease V (196 aa).

Mg(2+)-binding residues include Asp37 and Asp98.

Belongs to the endonuclease V family. Mg(2+) is required as a cofactor.

The protein resides in the cytoplasm. It catalyses the reaction Endonucleolytic cleavage at apurinic or apyrimidinic sites to products with a 5'-phosphate.. Its function is as follows. DNA repair enzyme involved in the repair of deaminated bases. Selectively cleaves double-stranded DNA at the second phosphodiester bond 3' to a deoxyinosine leaving behind the intact lesion on the nicked DNA. The sequence is that of Endonuclease V from Sulfolobus acidocaldarius (strain ATCC 33909 / DSM 639 / JCM 8929 / NBRC 15157 / NCIMB 11770).